We begin with the raw amino-acid sequence, 841 residues long: MELDDLDLSGSWPLDQITFASNFKSPVIFSSSEQPFSPLWSFSETSGDVGGELYSAAVAPTRFTDYSVLLASSESETTTKENNQVPSPSWGIMPLENPDSYCAIKAKMTQALRYFKESTGQQHVLAQVWAPVKNRGRYVLTTSGQPFVLGPNSNGLNQYRMVSLTYMFSLDGERDGELGLPGRVFRKKLPEWTPNVQYYSSKEFSRLGHALHYNVQGTLALPVFEPSRQLCVGVVELIMTSPKINYAPEVEKVCKALEAVNLKTSEILNHETTQICNEGRQNALAEILEILTVVCETYKLPLAQTWVPCRHRSVLAFGGGFKKSCSSFDGSCMGKVCMSTSDLAVYVVDAHVWGFRDACAEHHLQKGQGVAGRAFQSGNLCFCRDVTRFCKTDYPLVHYARMFKLTSCFAVCLKSTYTGDDEYVLEFFLPPAITDKSEQDCLLGSLLQTMKQHYSSLKVVSETELCENNMSLEVVEASEDGMVYSKLEPIRIHHPAQISKDYLELNAPEQKVSLNSDFMENNEVDDGVERFQTLDPIPEAKTVKKSERKRGKTEKTISLEVLQQYFAGSLKDAAKSLGVCPTTMKRICRQHGISRWPSRKINKVNRSLTRLKHVIDSVQGADGSLNLTSLSPRPWPHQIPPIDIQLAKNCPPTSTSPLSNLQDVKIENRDAEDSAGSSTSRASCKVNPICETRFRLPTHNQEPSRQVALDDSDSSSKNMTNFWAHLTCQDTASPTILQHKLVSIKATYREDIIRFKISPESVSITELKQQVAKRLKLETAAFELKYLDDDREWVSVSCDADLSECLDTSAAKANTLRLSVHDVTFNFGSSCESSEETMMCL.

The 86-residue stretch at 539 to 624 (EAKTVKKSER…IDSVQGADGS (86 aa)) folds into the RWP-RK domain. The disordered stretch occupies residues 649-682 (NCPPTSTSPLSNLQDVKIENRDAEDSAGSSTSRA). A compositionally biased stretch (polar residues) spans 651–662 (PPTSTSPLSNLQ). Residues 741 to 823 (LVSIKATYRE…NTLRLSVHDV (83 aa)) form the PB1 domain.

The protein localises to the nucleus. Probable transcription factor. This chain is Protein NLP6 (NLP6), found in Arabidopsis thaliana (Mouse-ear cress).